The following is a 187-amino-acid chain: dTTP/UTP pyrophosphatase (187 aa).

Catalysis depends on Asp65, which acts as the Proton acceptor.

This sequence belongs to the Maf family. YhdE subfamily. A divalent metal cation serves as cofactor.

It is found in the cytoplasm. The enzyme catalyses dTTP + H2O = dTMP + diphosphate + H(+). It carries out the reaction UTP + H2O = UMP + diphosphate + H(+). Its function is as follows. Nucleoside triphosphate pyrophosphatase that hydrolyzes dTTP and UTP. May have a dual role in cell division arrest and in preventing the incorporation of modified nucleotides into cellular nucleic acids. In Pyrococcus abyssi (strain GE5 / Orsay), this protein is dTTP/UTP pyrophosphatase.